The following is an 803-amino-acid chain: Phenylalanine--tRNA ligase beta subunit (803 aa).

The 113-residue stretch at 39 to 151 (SMKFSGIKIG…KNAIIGEDIK (113 aa)) folds into the tRNA-binding domain. One can recognise a B5 domain in the interval 406–482 (PKKILIKLYK…RFYGFEKIPI (77 aa)). Mg(2+) contacts are provided by Asp-466 and Asp-470. One can recognise an FDX-ACB domain in the interval 707–800 (SDIPFNYRDI…LKKNFLIEIR (94 aa)).

This sequence belongs to the phenylalanyl-tRNA synthetase beta subunit family. Type 1 subfamily. Tetramer of two alpha and two beta subunits. It depends on Mg(2+) as a cofactor.

It localises to the cytoplasm. It catalyses the reaction tRNA(Phe) + L-phenylalanine + ATP = L-phenylalanyl-tRNA(Phe) + AMP + diphosphate + H(+). The sequence is that of Phenylalanine--tRNA ligase beta subunit from Wigglesworthia glossinidia brevipalpis.